The sequence spans 467 residues: UPF0236 protein TTE0610/TTE0881/TTE1053/TTE2432 (467 aa).

Belongs to the UPF0236 family.

This chain is UPF0236 protein TTE0610/TTE0881/TTE1053/TTE2432, found in Caldanaerobacter subterraneus subsp. tengcongensis (strain DSM 15242 / JCM 11007 / NBRC 100824 / MB4) (Thermoanaerobacter tengcongensis).